The following is a 134-amino-acid chain: Arginine decarboxylase proenzyme (134 aa).

The active-site Schiff-base intermediate with substrate; via pyruvic acid is the serine 82. A Pyruvic acid (Ser); by autocatalysis modification is found at serine 82. The active-site Proton acceptor; for processing activity is the histidine 87. Cysteine 102 functions as the Proton donor; for catalytic activity in the catalytic mechanism.

Belongs to the prokaryotic AdoMetDC family. Type 1 subfamily. Heterooctamer of four alpha and four beta chains arranged as a tetramer of alpha/beta heterodimers. Pyruvate serves as cofactor. Post-translationally, is synthesized initially as an inactive proenzyme. Formation of the active enzyme involves a self-maturation process in which the active site pyruvoyl group is generated from an internal serine residue via an autocatalytic post-translational modification. Two non-identical subunits are generated from the proenzyme in this reaction, and the pyruvate is formed at the N-terminus of the alpha chain, which is derived from the carboxyl end of the proenzyme. The post-translation cleavage follows an unusual pathway, termed non-hydrolytic serinolysis, in which the side chain hydroxyl group of the serine supplies its oxygen atom to form the C-terminus of the beta chain, while the remainder of the serine residue undergoes an oxidative deamination to produce ammonia and the pyruvoyl group blocking the N-terminus of the alpha chain.

The enzyme catalyses L-arginine + H(+) = agmatine + CO2. Its pathway is amine and polyamine biosynthesis; agmatine biosynthesis; agmatine from L-arginine: step 1/1. Its function is as follows. Specifically catalyzes the decarboxylation of L-arginine to agmatine. Has no S-adenosylmethionine decarboxylase (AdoMetDC) activity. This Caldivirga maquilingensis (strain ATCC 700844 / DSM 13496 / JCM 10307 / IC-167) protein is Arginine decarboxylase proenzyme.